The chain runs to 683 residues: Rhophilin-2-B (683 aa).

An REM-1 domain is found at 25–99 (KSIAQTGRSK…LERLNISVEV (75 aa)). The BRO1 domain maps to 110–501 (PLIPLGLKET…TDIFQRLGPL (392 aa)). The PDZ domain maps to 515 to 592 (KMCITKEDGD…DSIEIQVISI (78 aa)).

Belongs to the RHPN family. In terms of assembly, interacts with RhoA.

The protein localises to the cytoplasm. Its subcellular location is the perinuclear region. Its function is as follows. Binds specifically to GTP-Rho. The protein is Rhophilin-2-B (rhpn2-b) of Xenopus laevis (African clawed frog).